A 196-amino-acid chain; its full sequence is Shikimate kinase (196 aa).

21 to 26 (GTGKSR) lines the ATP pocket. Serine 25 provides a ligand contact to Mg(2+). Residues aspartate 43, arginine 67, and glycine 89 each contribute to the substrate site. ATP is bound at residue arginine 126. Residue arginine 145 coordinates substrate. Position 161 (arginine 161) interacts with ATP.

Belongs to the shikimate kinase family. Monomer. It depends on Mg(2+) as a cofactor.

Its subcellular location is the cytoplasm. The enzyme catalyses shikimate + ATP = 3-phosphoshikimate + ADP + H(+). It functions in the pathway metabolic intermediate biosynthesis; chorismate biosynthesis; chorismate from D-erythrose 4-phosphate and phosphoenolpyruvate: step 5/7. Functionally, catalyzes the specific phosphorylation of the 3-hydroxyl group of shikimic acid using ATP as a cosubstrate. In Deinococcus radiodurans (strain ATCC 13939 / DSM 20539 / JCM 16871 / CCUG 27074 / LMG 4051 / NBRC 15346 / NCIMB 9279 / VKM B-1422 / R1), this protein is Shikimate kinase.